Here is a 120-residue protein sequence, read N- to C-terminus: Large ribosomal subunit protein uL18 (120 aa).

This sequence belongs to the universal ribosomal protein uL18 family. In terms of assembly, part of the 50S ribosomal subunit; part of the 5S rRNA/L5/L18/L25 subcomplex. Contacts the 5S and 23S rRNAs.

In terms of biological role, this is one of the proteins that bind and probably mediate the attachment of the 5S RNA into the large ribosomal subunit, where it forms part of the central protuberance. This is Large ribosomal subunit protein uL18 from Brucella anthropi (strain ATCC 49188 / DSM 6882 / CCUG 24695 / JCM 21032 / LMG 3331 / NBRC 15819 / NCTC 12168 / Alc 37) (Ochrobactrum anthropi).